Reading from the N-terminus, the 159-residue chain is Transcription elongation factor GreA (159 aa).

Residues 43 to 75 (LSENAEYDAAREEQSQLEAKIGEIENKLASATI) are a coiled coil.

Belongs to the GreA/GreB family.

Functionally, necessary for efficient RNA polymerase transcription elongation past template-encoded arresting sites. The arresting sites in DNA have the property of trapping a certain fraction of elongating RNA polymerases that pass through, resulting in locked ternary complexes. Cleavage of the nascent transcript by cleavage factors such as GreA or GreB allows the resumption of elongation from the new 3'terminus. GreA releases sequences of 2 to 3 nucleotides. The protein is Transcription elongation factor GreA of Chlorobaculum tepidum (strain ATCC 49652 / DSM 12025 / NBRC 103806 / TLS) (Chlorobium tepidum).